Consider the following 341-residue polypeptide: Ketol-acid reductoisomerase (NADP(+)) (341 aa).

The KARI N-terminal Rossmann domain occupies 1-182 (MATIYYDKDA…GCTRAGVLET (182 aa)). Residues 25-28 (YGSQ), Ser51, Ser53, and 83-86 (DQTQ) each bind NADP(+). His108 is a catalytic residue. Gly134 lines the NADP(+) pocket. The region spanning 183–328 (TFKEETETDL…KRLRDMMSWI (146 aa)) is the KARI C-terminal knotted domain. Mg(2+)-binding residues include Asp191, Glu195, Glu227, and Glu231. Ser252 contacts substrate.

This sequence belongs to the ketol-acid reductoisomerase family. Mg(2+) serves as cofactor.

It catalyses the reaction (2R)-2,3-dihydroxy-3-methylbutanoate + NADP(+) = (2S)-2-acetolactate + NADPH + H(+). It carries out the reaction (2R,3R)-2,3-dihydroxy-3-methylpentanoate + NADP(+) = (S)-2-ethyl-2-hydroxy-3-oxobutanoate + NADPH + H(+). It participates in amino-acid biosynthesis; L-isoleucine biosynthesis; L-isoleucine from 2-oxobutanoate: step 2/4. The protein operates within amino-acid biosynthesis; L-valine biosynthesis; L-valine from pyruvate: step 2/4. In terms of biological role, involved in the biosynthesis of branched-chain amino acids (BCAA). Catalyzes an alkyl-migration followed by a ketol-acid reduction of (S)-2-acetolactate (S2AL) to yield (R)-2,3-dihydroxy-isovalerate. In the isomerase reaction, S2AL is rearranged via a Mg-dependent methyl migration to produce 3-hydroxy-3-methyl-2-ketobutyrate (HMKB). In the reductase reaction, this 2-ketoacid undergoes a metal-dependent reduction by NADPH to yield (R)-2,3-dihydroxy-isovalerate. This is Ketol-acid reductoisomerase (NADP(+)) from Anaeromyxobacter sp. (strain K).